The sequence spans 412 residues: D-xylonate dehydratase (412 aa).

As to quaternary structure, homooctamer.

The enzyme catalyses D-xylonate = 2-dehydro-3-deoxy-D-arabinonate + H2O. In terms of biological role, NADP-dependent D-xylose dehydrogenase involved in the degradation of D-xylose, a major component of hemicelluloses such as xylan. Catalyzes the third reaction in the xylose utilization pathway through dehydratation of D-xylonate into 2-dehydro-3-deoxy-D-xylonate. In Haloferax volcanii (strain ATCC 29605 / DSM 3757 / JCM 8879 / NBRC 14742 / NCIMB 2012 / VKM B-1768 / DS2) (Halobacterium volcanii), this protein is D-xylonate dehydratase.